The chain runs to 318 residues: Ubiquitin-like domain-containing CTD phosphatase 1 (318 aa).

Residues 3-81 (LSLIIKWGGQ…IMMMGTREES (79 aa)) form the Ubiquitin-like domain. Residues 133-294 (PREGKKLLVL…LKLSQYLKEI (162 aa)) enclose the FCP1 homology domain. Mg(2+) contacts are provided by D143, D145, and D253.

Requires Mg(2+) as cofactor.

It is found in the nucleus. It catalyses the reaction O-phospho-L-seryl-[protein] + H2O = L-seryl-[protein] + phosphate. It carries out the reaction O-phospho-L-threonyl-[protein] + H2O = L-threonyl-[protein] + phosphate. Its function is as follows. Dephosphorylates 26S nuclear proteasomes, thereby decreasing their proteolytic activity. Recruited to the 19S regulatory particle of the 26S proteasome where it dephosphorylates 19S component psmc2 which impairs psmc2 ATPase activity and disrupts 26S proteasome assembly. Has also been reported to stimulate the proteolytic activity of the 26S proteasome. This chain is Ubiquitin-like domain-containing CTD phosphatase 1 (ublcp1), found in Xenopus tropicalis (Western clawed frog).